The sequence spans 403 residues: Probable eukaryotic initiation factor 4A (403 aa).

A disordered region spans residues 1–29 (MAQNDKIAPQDQDSFLDDQPGVRPIPSFD). Positions 26 to 54 (PSFDDMPLHQNLLRGIYSYGFEKPSSIQQ) match the Q motif motif. The region spanning 57–230 (IAPFTRGGDI…KKFMRDPVRI (174 aa)) is the Helicase ATP-binding domain. ATP is bound at residue 70–77 (AQSGTGKT). Positions 178–181 (DEAD) match the DEAD box motif. Residues 241–401 (GIKQFFIAVE…ELPVDFAAYL (161 aa)) form the Helicase C-terminal domain.

Belongs to the DEAD box helicase family. eIF4A subfamily. In terms of assembly, eIF4F is a multi-subunit complex, the composition of which varies with external and internal environmental conditions. It is composed of at least EIF4A, EIF4E and EIF4G.

The catalysed reaction is ATP + H2O = ADP + phosphate + H(+). Functionally, ATP-dependent RNA helicase which is a subunit of the eIF4F complex involved in cap recognition and is required for mRNA binding to ribosome. In the current model of translation initiation, eIF4A unwinds RNA secondary structures in the 5'-UTR of mRNAs which is necessary to allow efficient binding of the small ribosomal subunit, and subsequent scanning for the initiator codon. This Leishmania infantum protein is Probable eukaryotic initiation factor 4A.